Here is a 127-residue protein sequence, read N- to C-terminus: Modulator protein MzrA (127 aa).

The Cytoplasmic segment spans residues 1–10 (MGLQNMTLRR). A helical membrane pass occupies residues 11 to 31 (FTLSMSALLLLCALLWLWAAL). The Periplasmic segment spans residues 32-127 (EQQESSLAIR…RLRDAPHRLG (96 aa)).

Belongs to the MzrA family. Interacts with EnvZ.

The protein localises to the cell inner membrane. Functionally, modulates the activity of the EnvZ/OmpR two-component regulatory system, probably by directly modulating EnvZ enzymatic activity and increasing stability of phosphorylated OmpR. In Enterobacter lignolyticus (strain SCF1), this protein is Modulator protein MzrA.